Consider the following 667-residue polypeptide: Glycine--tRNA ligase beta subunit (667 aa).

Belongs to the class-II aminoacyl-tRNA synthetase family. Tetramer of two alpha and two beta subunits.

The protein resides in the cytoplasm. It carries out the reaction tRNA(Gly) + glycine + ATP = glycyl-tRNA(Gly) + AMP + diphosphate. The sequence is that of Glycine--tRNA ligase beta subunit from Rickettsia canadensis (strain McKiel).